The chain runs to 458 residues: MTAEEMKAAENGAQSAPLPLEGVDISPKQDEGVLKVIKREGTGTETPMIGDRVFVHYTGWLLDGTKFDSSLDRKDKFSFDLGKGEVIKAWDIAVATMKVGEVCHITCKPEYAYGAAGSPPKIPPNATLVFEVELFEFKGEDLTEEEDGGIIRRIRTRGEGYARPNDGAMVEVALEGYHKDRLFDQRELCFEVGEGESLDLPCGLEEAIQRMEKGEHSIVYLKPSYAFGSVGKERFQIPPHAELRYEVRLKSFEKAKESWEMSSAEKLEQSNIVKERGTAYFKEGKYKQALLQYKKIVSWLEYESSFSGEEMQKVHALRLASHLNLAMCHLKLQAFSAAIESCNKALELDSNNEKGLFRRGEAHLAVNDFDLARADFQKVLQLYPSNKAAKTQLAVCQQRTRRQLAREKKLYANMFERLAEEEHKVKAEVAAGDHPTDAEMKGERNNVAENQSRVETEA.

The residue at position 1 (methionine 1) is an N-acetylmethionine; in peptidyl-prolyl cis-trans isomerase FKBP4; alternate. The tract at residues 1–24 (MTAEEMKAAENGAQSAPLPLEGVD) is disordered. Threonine 2 bears the N-acetylthreonine; in peptidyl-prolyl cis-trans isomerase FKBP4, N-terminally processed; partial mark. The region spanning 50 to 138 (GDRVFVHYTG…VFEVELFEFK (89 aa)) is the PPIase FKBP-type 1 domain. Position 143 is a phosphothreonine; by CK2 (threonine 143). A PPIase FKBP-type 2 domain is found at 167–253 (GAMVEVALEG…RYEVRLKSFE (87 aa)). Tyrosine 220 is modified (phosphotyrosine). An interaction with tubulin region spans residues 267–400 (LEQSNIVKER…TQLAVCQQRT (134 aa)). 3 TPR repeats span residues 270 to 303 (SNIV…LEYE), 319 to 352 (LASH…DSNN), and 353 to 386 (EKGL…YPSN). N6-acetyllysine is present on lysine 282. An Omega-N-methylarginine modification is found at arginine 373. Positions 428–458 (EVAAGDHPTDAEMKGERNNVAENQSRVETEA) are disordered. Residues 434 to 458 (HPTDAEMKGERNNVAENQSRVETEA) show a composition bias toward basic and acidic residues. Phosphothreonine is present on threonine 436. Lysine 441 participates in a covalent cross-link: Glycyl lysine isopeptide (Lys-Gly) (interchain with G-Cter in SUMO1). Serine 452 is subject to Phosphoserine.

As to quaternary structure, homodimer. Interacts with GLMN. Associates with HSP90AA1 and HSPA1A/HSPA1B in steroid hormone receptor complexes. Also interacts with peroxisomal phytanoyl-CoA alpha-hydroxylase (PHYH). Interacts with NR3C1 and dynein. Interacts with HSF1 in the HSP90 complex. Associates with tubulin. Interacts with MAPT/TAU. Interacts (via TPR domain) with S100A1, S100A2 and S100A6; the interaction is Ca(2+) dependent. Interaction with S100A1 and S100A2 (but not with S100A6) leads to inhibition of FKBP4-HSP90 interaction. Interacts with dynein; contributes to NR3C1 transport to the nucleus. In terms of processing, phosphorylation by CK2 results in loss of HSP90 binding activity.

The protein resides in the cytoplasm. It is found in the cytosol. It localises to the mitochondrion. The protein localises to the nucleus. Its subcellular location is the cytoskeleton. It carries out the reaction [protein]-peptidylproline (omega=180) = [protein]-peptidylproline (omega=0). Inhibited by FK506. Functionally, immunophilin protein with PPIase and co-chaperone activities. Component of steroid receptors heterocomplexes through interaction with heat-shock protein 90 (HSP90). May play a role in the intracellular trafficking of heterooligomeric forms of steroid hormone receptors between cytoplasm and nuclear compartments. The isomerase activity controls neuronal growth cones via regulation of TRPC1 channel opening. Also acts as a regulator of microtubule dynamics by inhibiting MAPT/TAU ability to promote microtubule assembly. May have a protective role against oxidative stress in mitochondria. This Mus musculus (Mouse) protein is Peptidyl-prolyl cis-trans isomerase FKBP4 (Fkbp4).